The primary structure comprises 262 residues: Small ribosomal subunit protein uS2 (262 aa).

Positions 236–262 (AGGAAEAPAAEDVQTEEAAAPEADSAE) are disordered.

The protein belongs to the universal ribosomal protein uS2 family.

The sequence is that of Small ribosomal subunit protein uS2 from Psychrobacter sp. (strain PRwf-1).